We begin with the raw amino-acid sequence, 283 residues long: Pantothenate synthetase (283 aa).

30-37 lines the ATP pocket; that stretch reads MGALHEGH. The active-site Proton donor is H37. Q61 lines the (R)-pantoate pocket. Q61 lines the beta-alanine pocket. 147–150 contributes to the ATP binding site; it reads GEKD. Q153 serves as a coordination point for (R)-pantoate. ATP-binding positions include V176 and 184-187; that span reads VSSR.

It belongs to the pantothenate synthetase family. As to quaternary structure, homodimer.

It localises to the cytoplasm. It carries out the reaction (R)-pantoate + beta-alanine + ATP = (R)-pantothenate + AMP + diphosphate + H(+). Its pathway is cofactor biosynthesis; (R)-pantothenate biosynthesis; (R)-pantothenate from (R)-pantoate and beta-alanine: step 1/1. In terms of biological role, catalyzes the condensation of pantoate with beta-alanine in an ATP-dependent reaction via a pantoyl-adenylate intermediate. The polypeptide is Pantothenate synthetase (Chlorobium limicola (strain DSM 245 / NBRC 103803 / 6330)).